A 208-amino-acid chain; its full sequence is Small ribosomal subunit protein uS4 (208 aa).

Residues 98 to 158 (RRLDNVVYRL…EKNRKISVVA (61 aa)) enclose the S4 RNA-binding domain.

The protein belongs to the universal ribosomal protein uS4 family. Part of the 30S ribosomal subunit. Contacts protein S5. The interaction surface between S4 and S5 is involved in control of translational fidelity.

In terms of biological role, one of the primary rRNA binding proteins, it binds directly to 16S rRNA where it nucleates assembly of the body of the 30S subunit. With S5 and S12 plays an important role in translational accuracy. This chain is Small ribosomal subunit protein uS4, found in Lawsonia intracellularis (strain PHE/MN1-00).